A 422-amino-acid chain; its full sequence is UDP-N-acetylmuramoylalanine--D-glutamate ligase (422 aa).

Position 102 to 108 (102 to 108) interacts with ATP; sequence GTNGKTT.

The protein belongs to the MurCDEF family.

Its subcellular location is the cytoplasm. It carries out the reaction UDP-N-acetyl-alpha-D-muramoyl-L-alanine + D-glutamate + ATP = UDP-N-acetyl-alpha-D-muramoyl-L-alanyl-D-glutamate + ADP + phosphate + H(+). It functions in the pathway cell wall biogenesis; peptidoglycan biosynthesis. In terms of biological role, cell wall formation. Catalyzes the addition of glutamate to the nucleotide precursor UDP-N-acetylmuramoyl-L-alanine (UMA). This is UDP-N-acetylmuramoylalanine--D-glutamate ligase from Helicobacter pylori (strain J99 / ATCC 700824) (Campylobacter pylori J99).